A 678-amino-acid polypeptide reads, in one-letter code: Protein mono-ADP-ribosyltransferase PARP15 (678 aa).

A compositionally biased stretch (low complexity) spans 1–19 (MAAPGPLPAAALSPGAPTP). A disordered region spans residues 1–67 (MAAPGPLPAA…SSRSMSRDNK (67 aa)). Positions 49 to 58 (GARKASRRSS) are enriched in basic residues. 2 Macro domains span residues 78–267 (NVVA…TNWS) and 293–464 (CFTA…KKRD). Substrate-binding positions include 312 to 313 (DI), 324 to 325 (ST), arginine 331, valine 335, 409 to 413 (GTGNA), and glutamine 449. In terms of domain architecture, PARP catalytic spans 482 to 678 (LPEHWTDMNH…YPEYLITFTA (197 aa)).

The protein belongs to the ARTD/PARP family.

The protein localises to the nucleus. It carries out the reaction L-aspartyl-[protein] + NAD(+) = 4-O-(ADP-D-ribosyl)-L-aspartyl-[protein] + nicotinamide. The catalysed reaction is L-glutamyl-[protein] + NAD(+) = 5-O-(ADP-D-ribosyl)-L-glutamyl-[protein] + nicotinamide. Functionally, mono-ADP-ribosyltransferase that mediates mono-ADP-ribosylation of target proteins. Acts as a negative regulator of transcription. The chain is Protein mono-ADP-ribosyltransferase PARP15 from Homo sapiens (Human).